The primary structure comprises 338 residues: Anthranilate phosphoribosyltransferase (338 aa).

Residues Gly-81, 84 to 85, Thr-89, 91 to 94, 109 to 117, and Ala-121 each bind 5-phospho-alpha-D-ribose 1-diphosphate; these read GD, NIST, and KHGNRNLSS. Gly-81 contributes to the anthranilate binding site. Ser-93 is a binding site for Mg(2+). Anthranilate is bound at residue Asn-112. An anthranilate-binding site is contributed by Arg-167. The Mg(2+) site is built by Asp-226 and Glu-227.

Belongs to the anthranilate phosphoribosyltransferase family. Homodimer. Mg(2+) is required as a cofactor.

It catalyses the reaction N-(5-phospho-beta-D-ribosyl)anthranilate + diphosphate = 5-phospho-alpha-D-ribose 1-diphosphate + anthranilate. It functions in the pathway amino-acid biosynthesis; L-tryptophan biosynthesis; L-tryptophan from chorismate: step 2/5. In terms of biological role, catalyzes the transfer of the phosphoribosyl group of 5-phosphorylribose-1-pyrophosphate (PRPP) to anthranilate to yield N-(5'-phosphoribosyl)-anthranilate (PRA). This is Anthranilate phosphoribosyltransferase from Cereibacter sphaeroides (strain KD131 / KCTC 12085) (Rhodobacter sphaeroides).